A 183-amino-acid polypeptide reads, in one-letter code: Adenine phosphoribosyltransferase (183 aa).

Belongs to the purine/pyrimidine phosphoribosyltransferase family. As to quaternary structure, homodimer.

The protein localises to the cytoplasm. It carries out the reaction AMP + diphosphate = 5-phospho-alpha-D-ribose 1-diphosphate + adenine. Its pathway is purine metabolism; AMP biosynthesis via salvage pathway; AMP from adenine: step 1/1. Its function is as follows. Catalyzes a salvage reaction resulting in the formation of AMP, that is energically less costly than de novo synthesis. In Escherichia coli (strain K12 / MC4100 / BW2952), this protein is Adenine phosphoribosyltransferase.